The chain runs to 178 residues: ATP synthase subunit delta (178 aa).

It belongs to the ATPase delta chain family. As to quaternary structure, F-type ATPases have 2 components, F(1) - the catalytic core - and F(0) - the membrane proton channel. F(1) has five subunits: alpha(3), beta(3), gamma(1), delta(1), epsilon(1). F(0) has three main subunits: a(1), b(2) and c(10-14). The alpha and beta chains form an alternating ring which encloses part of the gamma chain. F(1) is attached to F(0) by a central stalk formed by the gamma and epsilon chains, while a peripheral stalk is formed by the delta and b chains.

It localises to the cell inner membrane. Functionally, f(1)F(0) ATP synthase produces ATP from ADP in the presence of a proton or sodium gradient. F-type ATPases consist of two structural domains, F(1) containing the extramembraneous catalytic core and F(0) containing the membrane proton channel, linked together by a central stalk and a peripheral stalk. During catalysis, ATP synthesis in the catalytic domain of F(1) is coupled via a rotary mechanism of the central stalk subunits to proton translocation. In terms of biological role, this protein is part of the stalk that links CF(0) to CF(1). It either transmits conformational changes from CF(0) to CF(1) or is implicated in proton conduction. In Alcanivorax borkumensis (strain ATCC 700651 / DSM 11573 / NCIMB 13689 / SK2), this protein is ATP synthase subunit delta.